The chain runs to 277 residues: UPF0276 protein PP_0992 (277 aa).

Belongs to the UPF0276 family.

This Pseudomonas putida (strain ATCC 47054 / DSM 6125 / CFBP 8728 / NCIMB 11950 / KT2440) protein is UPF0276 protein PP_0992.